The sequence spans 261 residues: 3-methyl-2-oxobutanoate hydroxymethyltransferase (261 aa).

The Mg(2+) site is built by D42 and D81. Residues 42-43, D81, and K110 contribute to the 3-methyl-2-oxobutanoate site; that span reads DS. E112 lines the Mg(2+) pocket. E179 serves as the catalytic Proton acceptor.

This sequence belongs to the PanB family. In terms of assembly, homodecamer; pentamer of dimers. Requires Mg(2+) as cofactor.

The protein resides in the cytoplasm. It carries out the reaction 3-methyl-2-oxobutanoate + (6R)-5,10-methylene-5,6,7,8-tetrahydrofolate + H2O = 2-dehydropantoate + (6S)-5,6,7,8-tetrahydrofolate. The protein operates within cofactor biosynthesis; coenzyme A biosynthesis. Its function is as follows. Catalyzes the reversible reaction in which hydroxymethyl group from 5,10-methylenetetrahydrofolate is transferred onto alpha-ketoisovalerate to form ketopantoate. The polypeptide is 3-methyl-2-oxobutanoate hydroxymethyltransferase (Pyrobaculum neutrophilum (strain DSM 2338 / JCM 9278 / NBRC 100436 / V24Sta) (Thermoproteus neutrophilus)).